Reading from the N-terminus, the 278-residue chain is Elongation factor Ts (278 aa).

The interval 81 to 84 (TDFV) is involved in Mg(2+) ion dislocation from EF-Tu.

Belongs to the EF-Ts family.

The protein localises to the cytoplasm. In terms of biological role, associates with the EF-Tu.GDP complex and induces the exchange of GDP to GTP. It remains bound to the aminoacyl-tRNA.EF-Tu.GTP complex up to the GTP hydrolysis stage on the ribosome. The sequence is that of Elongation factor Ts from Thermobifida fusca (strain YX).